A 512-amino-acid chain; its full sequence is Zinc metalloprotease mde10 (512 aa).

The N-terminal stretch at 1-15 is a signal peptide; that stretch reads MRLVLLFSCVLAVSS. Asn35 carries an N-linked (GlcNAc...) asparagine glycan. A Peptidase M12B domain is found at 65–306; it reads QTLWIGVVAD…KYVSLSCLSK (242 aa). Position 229 (His229) interacts with Zn(2+). Residue Glu230 is part of the active site. His233 and His239 together coordinate Zn(2+). Cystine bridges form between Cys246-Cys254 and Cys374-Cys394. The Disintegrin domain occupies 315 to 402; that stretch reads LGTCGNGIVE…KCPVDENWDD (88 aa). Residue Asn432 is glycosylated (N-linked (GlcNAc...) asparagine).

The cofactor is Zn(2+). In terms of processing, glycosylated.

Its subcellular location is the endoplasmic reticulum. It is found in the spore wall. In terms of biological role, has a role in the development of the spore envelope. The polypeptide is Zinc metalloprotease mde10 (mde10) (Schizosaccharomyces pombe (strain 972 / ATCC 24843) (Fission yeast)).